We begin with the raw amino-acid sequence, 550 residues long: Arginine--tRNA ligase (550 aa).

Positions 130-140 (ANPTGPIHIGG) match the 'HIGH' region motif.

This sequence belongs to the class-I aminoacyl-tRNA synthetase family. As to quaternary structure, monomer.

It localises to the cytoplasm. It catalyses the reaction tRNA(Arg) + L-arginine + ATP = L-arginyl-tRNA(Arg) + AMP + diphosphate. This is Arginine--tRNA ligase (argS) from Mycolicibacterium smegmatis (strain ATCC 700084 / mc(2)155) (Mycobacterium smegmatis).